A 69-amino-acid polypeptide reads, in one-letter code: DNA-directed RNA polymerase subunit omega (69 aa).

This sequence belongs to the RNA polymerase subunit omega family. In terms of assembly, the RNAP catalytic core consists of 2 alpha, 1 beta, 1 beta' and 1 omega subunit. When a sigma factor is associated with the core the holoenzyme is formed, which can initiate transcription.

The catalysed reaction is RNA(n) + a ribonucleoside 5'-triphosphate = RNA(n+1) + diphosphate. Functionally, promotes RNA polymerase assembly. Latches the N- and C-terminal regions of the beta' subunit thereby facilitating its interaction with the beta and alpha subunits. This chain is DNA-directed RNA polymerase subunit omega, found in Hahella chejuensis (strain KCTC 2396).